Reading from the N-terminus, the 562-residue chain is NAD-dependent malic enzyme (562 aa).

The active-site Proton donor is tyrosine 101. Position 154 (arginine 154) interacts with NAD(+). Lysine 172 acts as the Proton acceptor in catalysis. A divalent metal cation-binding residues include glutamate 243, aspartate 244, and aspartate 267. The NAD(+) site is built by aspartate 267 and asparagine 415.

Belongs to the malic enzymes family. Homotetramer. Mg(2+) is required as a cofactor. The cofactor is Mn(2+).

The catalysed reaction is (S)-malate + NAD(+) = pyruvate + CO2 + NADH. It carries out the reaction oxaloacetate + H(+) = pyruvate + CO2. In Aliivibrio fischeri (strain MJ11) (Vibrio fischeri), this protein is NAD-dependent malic enzyme.